Reading from the N-terminus, the 371-residue chain is Cytochrome b (371 aa).

4 helical membrane passes run phenylalanine 25–valine 45, tryptophan 69–isoleucine 90, tryptophan 105–leucine 125, and phenylalanine 170–leucine 190. The heme b site is built by histidine 75 and histidine 89. The heme b site is built by histidine 174 and histidine 188. An a ubiquinone-binding site is contributed by histidine 193. The next 4 membrane-spanning stretches (helical) occupy residues tyrosine 218–leucine 238, leucine 280–histidine 300, methionine 312–threonine 332, and phenylalanine 339–proline 358.

It belongs to the cytochrome b family. The cytochrome bc1 complex contains 3 respiratory subunits (MT-CYB, CYC1 and UQCRFS1), 2 core proteins (UQCRC1 and UQCRC2) and probably 6 low-molecular weight proteins. Heme b serves as cofactor.

The protein localises to the mitochondrion inner membrane. Functionally, component of the ubiquinol-cytochrome c reductase complex (complex III or cytochrome b-c1 complex) that is part of the mitochondrial respiratory chain. The b-c1 complex mediates electron transfer from ubiquinol to cytochrome c. Contributes to the generation of a proton gradient across the mitochondrial membrane that is then used for ATP synthesis. The chain is Cytochrome b (MT-CYB) from Casarea dussumieri (Round Island keel-scaled boa).